The following is a 396-amino-acid chain: Elongation factor Tu (396 aa).

Residues 10 to 206 enclose the tr-type G domain; that stretch reads KPHVNVGTIG…ALDTYIPTPE (197 aa). A G1 region spans residues 19–26; the sequence is GHVDHGKT. 19–26 is a binding site for GTP; sequence GHVDHGKT. Residue Thr26 participates in Mg(2+) binding. The G2 stretch occupies residues 60–64; that stretch reads GITIN. Residues 81 to 84 form a G3 region; sequence DCPG. GTP contacts are provided by residues 81-85 and 136-139; these read DCPGH and NKCD. Residues 136-139 are G4; that stretch reads NKCD. The segment at 174 to 176 is G5; the sequence is SAK.

It belongs to the TRAFAC class translation factor GTPase superfamily. Classic translation factor GTPase family. EF-Tu/EF-1A subfamily. As to quaternary structure, monomer.

It is found in the cytoplasm. It catalyses the reaction GTP + H2O = GDP + phosphate + H(+). Functionally, GTP hydrolase that promotes the GTP-dependent binding of aminoacyl-tRNA to the A-site of ribosomes during protein biosynthesis. The polypeptide is Elongation factor Tu (Paraburkholderia xenovorans (strain LB400)).